Consider the following 28-residue polypeptide: M-poneritoxin-Dq4b/U1-poneritoxin-Dq4c/U1-poneritoxin-Dq4d (28 aa).

Met20 carries the post-translational modification Methionine sulfoxide; in form U1-PONTX-Dq4d. Ala28 is modified (alanine amide; in form Dq-1362 and U1-PONTX-Dq4d).

In terms of processing, occurs in 3 forms, M-PONTX-Dq4b has an amidated Ala-28, U1-PONTX-Dq4d has an amidated Ala-28 and an oxidized Met-20, U1-PONTX-Dq4c has no modifications at either Met-20 or Ala-28. In terms of tissue distribution, expressed by the venom gland.

The protein localises to the secreted. Functionally, M-poneritoxin-Dq4b: this synthetic peptide has antimicrobial activity against Gram-positive bacteria B.amyloliquefacies S499 (MIC=0.1 mM), L.monocytogenes 2231 and S.aureus ATCC 29213, against Gram-negative bacteria P.putida BTP1, P.aeruginosa PaO1 and E.coli ATCC 10536, and against the fungi S.cerevisiae, R.mucilaginosa and C.cucumerinum. Not active against the fungi F.oxysporum and B.cinerea. The sequence is that of M-poneritoxin-Dq4b/U1-poneritoxin-Dq4c/U1-poneritoxin-Dq4d from Dinoponera quadriceps (South American ant).